A 150-amino-acid chain; its full sequence is uncharacterized protein (150 aa).

A signal peptide spans 1-23 (MYSILIACLVLLLCLIIYVGHRA).

Belongs to the asfivirus EP152R family.

Its subcellular location is the virion. This is an uncharacterized protein from African swine fever virus (isolate Tick/South Africa/Pretoriuskop Pr4/1996) (ASFV).